We begin with the raw amino-acid sequence, 155 residues long: 6,7-dimethyl-8-ribityllumazine synthase (155 aa).

5-amino-6-(D-ribitylamino)uracil contacts are provided by residues F24, 58–60, and 82–84; these read AFE and AII. Residue 87–88 coordinates (2S)-2-hydroxy-3-oxobutyl phosphate; the sequence is ST. The active-site Proton donor is the H90. Position 115 (F115) interacts with 5-amino-6-(D-ribitylamino)uracil. R129 serves as a coordination point for (2S)-2-hydroxy-3-oxobutyl phosphate.

It belongs to the DMRL synthase family.

The enzyme catalyses (2S)-2-hydroxy-3-oxobutyl phosphate + 5-amino-6-(D-ribitylamino)uracil = 6,7-dimethyl-8-(1-D-ribityl)lumazine + phosphate + 2 H2O + H(+). Its pathway is cofactor biosynthesis; riboflavin biosynthesis; riboflavin from 2-hydroxy-3-oxobutyl phosphate and 5-amino-6-(D-ribitylamino)uracil: step 1/2. Its function is as follows. Catalyzes the formation of 6,7-dimethyl-8-ribityllumazine by condensation of 5-amino-6-(D-ribitylamino)uracil with 3,4-dihydroxy-2-butanone 4-phosphate. This is the penultimate step in the biosynthesis of riboflavin. The sequence is that of 6,7-dimethyl-8-ribityllumazine synthase from Chlorobium phaeobacteroides (strain BS1).